A 515-amino-acid polypeptide reads, in one-letter code: Maturase K (515 aa).

The protein belongs to the intron maturase 2 family. MatK subfamily.

It is found in the plastid. Its subcellular location is the chloroplast. Functionally, usually encoded in the trnK tRNA gene intron. Probably assists in splicing its own and other chloroplast group II introns. The protein is Maturase K of Pinus tabuliformis (Chinese red pine).